Consider the following 145-residue polypeptide: UPF0310 protein Mvan_0064 (145 aa).

It belongs to the UPF0310 family.

The protein is UPF0310 protein Mvan_0064 of Mycolicibacterium vanbaalenii (strain DSM 7251 / JCM 13017 / BCRC 16820 / KCTC 9966 / NRRL B-24157 / PYR-1) (Mycobacterium vanbaalenii).